The following is a 497-amino-acid chain: MGSLEMVPMGAGPPSPGGDPDGDDGGNNSQYPSASGSSGNTPTPPNDEERESNEEPPPPYEDPYWGNGDRHSDYQPLGTQDQSLYLGLQHDGNDGLPPPPYSPRDDSSQHIYEEAGRGSMNPVCLPVIVAPYLFWLAAIAASCFTASVSTVVTATGLALSLLLLAAVASSYAAAQRKLLTPVTVLTAVVTFFAICLTWRIEDPPFNSLLFALLAAAGGLQGIYVLVMLVLLILAYRRRWRRLTVCGGIMFLACVLVLIVDAVLQLSPLLGAVTVVSMTLLLLAFVLWLSSPGGLGTLGAALLTLAAALALLASLILGTLNLTTMFLLMLLWTLVVLLICSSCSSCPLSKILLARLFLYALALLLLASALIAGGSILQTNFKSLSSTEFIPNLFCMLLLIVAGILFILAILTEWGSGNRTYGPVFMCLGGLLTMVAGAVWLTVMTNTLLSAWILTAGFLIFLIGFALFGVIRCCRYCCYYCLTLESEERPPTPYRNTV.

Residues 1–108 form a disordered region; the sequence is MGSLEMVPMG…PPYSPRDDSS (108 aa). The Cytoplasmic portion of the chain corresponds to 1–123; the sequence is MGSLEMVPMG…EAGRGSMNPV (123 aa). Residues 27–41 show a composition bias toward polar residues; that stretch reads NNSQYPSASGSSGNT. Residues 97 to 101 carry the PPxY motif motif; the sequence is PPPPY. Residue Tyr-112 is modified to Phosphotyrosine; by host. Residues 124-144 traverse the membrane as a helical segment; the sequence is CLPVIVAPYLFWLAAIAASCF. Over 145–147 the chain is Extracellular; that stretch reads TAS. A helical transmembrane segment spans residues 148 to 168; the sequence is VSTVVTATGLALSLLLLAAVA. Over 169 to 177 the chain is Cytoplasmic; sequence SSYAAAQRK. Residues 178 to 198 form a helical membrane-spanning segment; sequence LLTPVTVLTAVVTFFAICLTW. At 199–211 the chain is on the extracellular side; that stretch reads RIEDPPFNSLLFA. A helical transmembrane segment spans residues 212–232; the sequence is LLAAAGGLQGIYVLVMLVLLI. The Cytoplasmic segment spans residues 233 to 241; sequence LAYRRRWRR. A helical membrane pass occupies residues 242-262; it reads LTVCGGIMFLACVLVLIVDAV. Over 263–267 the chain is Extracellular; the sequence is LQLSP. Residues 268 to 288 traverse the membrane as a helical segment; it reads LLGAVTVVSMTLLLLAFVLWL. At 289 to 296 the chain is on the cytoplasmic side; it reads SSPGGLGT. A helical transmembrane segment spans residues 297–317; that stretch reads LGAALLTLAAALALLASLILG. Position 318 (Thr-318) is a topological domain, extracellular. The helical transmembrane segment at 319 to 339 threads the bilayer; that stretch reads LNLTTMFLLMLLWTLVVLLIC. The Cytoplasmic portion of the chain corresponds to 340–354; the sequence is SSCSSCPLSKILLAR. The helical transmembrane segment at 355 to 375 threads the bilayer; sequence LFLYALALLLLASALIAGGSI. The Extracellular segment spans residues 376–388; it reads LQTNFKSLSSTEF. Residues 389–409 traverse the membrane as a helical segment; sequence IPNLFCMLLLIVAGILFILAI. Residues 410–422 are Cytoplasmic-facing; sequence LTEWGSGNRTYGP. A helical transmembrane segment spans residues 423 to 443; that stretch reads VFMCLGGLLTMVAGAVWLTVM. Topologically, residues 444 to 449 are extracellular; that stretch reads TNTLLS. The helical transmembrane segment at 450-470 threads the bilayer; it reads AWILTAGFLIFLIGFALFGVI. The Cytoplasmic segment spans residues 471-497; the sequence is RCCRYCCYYCLTLESEERPPTPYRNTV.

It belongs to the herpesviridae LMP-2 family. As to quaternary structure, the cytoplasmic N-terminal domain interacts with human SRC family protein tyrosine kinases SYK and LYN. Binds human ITCH, WWP2 and NEDD4L. Post-translationally, phosphorylated on cytoplasmic N-terminal tyrosine residues, possibly by human LYN. In terms of processing, can be ubiquitinated by human ITCH and WWP2 on the N-terminus in a lysine-independent manner.

It is found in the host cell membrane. The protein resides in the host endomembrane system. Its subcellular location is the host cytoplasm. It localises to the host perinuclear region. Functionally, maintains EBV latent infection of B-lymphocyte, by preventing lytic reactivation of the virus in response to surface immunoglobulin (sIg) cross-linking. Acts like a dominant negative inhibitor of the sIg-associated protein tyrosine kinases, LYN and SYK. Also blocks translocation of the B-cell antigen receptor (BCR) into lipid rafts, preventing the subsequent signaling and accelerated internalization of the BCR upon BCR cross-linking. Serves as a molecular scaffold to recruit SYK, LYN and E3 protein-ubiquitin ligases, such as ITCH and NEDD4L, leading to ubiquitination and potential degradation of both tyrosines kinases. Possesses a constitutive signaling activity in non-transformed cells, inducing bypass of normal B lymphocyte developmental checkpoints allowing immunoglobulin-negative cells to colonize peripheral lymphoid organs. May be a negative regulator of isoform LMP2A. The sequence is that of Latent membrane protein 2 (LMP2) from Homo sapiens (Human).